The following is a 464-amino-acid chain: MPPPSLLHLHSRAPLQPRPFRMNSRAAPSRVVVCSVASAEGFISAAPILLPDGPWKQVEGGVTAAKGFKAAGIYGGLRAKGEKPDLALVTCDVDATVAGTFTTNVVAAAPVLYCKHALSTSKTGRAVLINAGQANAATGDLGYQDAVDSADAVAKLLNVSTDNILIQSTGVIGQRIKKEALLNSLPRLVGSLSSSVQGANSAAVAITTTDLVSKSIAVQTEIGGVAIRIGGMAKGSGMIHPNMATMLGVLTTDAQVSNDVWREMVRTSVSRSFNQITVDGDTSTNDCVIAMASGLSGLSRIQSLDSIEAQQFQACLDAVMQGLAKSIAWDGEGATCLIEVTVSGANNEAEAAKIARSVASSSLVKAAVFGRDPNWGRIACSVGYSGIQFDANRLDISLGVIPLMKNGQPLPFDRSAASRYLKDAGDAHGTVNIDISVGSGGGNGKAWGCDLSYKYVEINAEYTT.

Substrate-binding residues include Thr-208, Lys-234, Thr-245, Glu-332, Asn-459, and Thr-464. Thr-245 serves as the catalytic Nucleophile.

This sequence belongs to the ArgJ family. In terms of assembly, heterodimer of an alpha and a beta chain.

The protein resides in the plastid. The protein localises to the chloroplast. It carries out the reaction N(2)-acetyl-L-ornithine + L-glutamate = N-acetyl-L-glutamate + L-ornithine. The enzyme catalyses L-glutamate + acetyl-CoA = N-acetyl-L-glutamate + CoA + H(+). It functions in the pathway amino-acid biosynthesis; L-arginine biosynthesis; L-ornithine and N-acetyl-L-glutamate from L-glutamate and N(2)-acetyl-L-ornithine (cyclic): step 1/1. It participates in amino-acid biosynthesis; L-arginine biosynthesis; N(2)-acetyl-L-ornithine from L-glutamate: step 1/4. Its function is as follows. Catalyzes two activities which are involved in the cyclic version of arginine biosynthesis: the synthesis of acetylglutamate from glutamate and acetyl-CoA, and of ornithine by transacetylation between acetylornithine and glutamate. The protein is Arginine biosynthesis bifunctional protein ArgJ, chloroplastic of Sorghum bicolor (Sorghum).